A 3425-amino-acid polypeptide reads, in one-letter code: Genome polyprotein (3425 aa).

An interaction with host EXOC1 region spans residues 3-16 (NKKPGRPGSGRVVN). Residues 38–73 (VLRGAGPIRFVLALLTFFKFTALRPTIGMLKRWKLV) are hydrophobic; homodimerization of capsid protein C. Residues 105-120 (GGSCSWIIMLLPIVAG) constitute a propeptide, ER anchor for the capsid protein C, removed in mature form by serine protease NS3. Residues 105-125 (GGSCSWIIMLLPIVAGLKLGN) traverse the membrane as a helical segment. The N-linked (GlcNAc...) asparagine; by host glycan is linked to Asn-135. 2 helical membrane passes run 247-267 (WALRNPGYALAAIFIGWNLGT) and 273-293 (IIFTIMLMLIAPAYSFSCLGM). Intrachain disulfides connect Cys-290/Cys-317, Cys-347/Cys-403, Cys-361/Cys-392, Cys-379/Cys-408, Cys-477/Cys-575, and Cys-592/Cys-623. The segment at 385 to 398 (DRGWGNGCGLFGKG) is fusion peptide. 2 consecutive transmembrane segments (helical) span residues 740–760 (LFGGMSWTTQGMLGALLLWMG) and 768–788 (ISMTFLAVGGILVFLAVNVNA). Cys-792 and Cys-803 are oxidised to a cystine. 3 N-linked (GlcNAc...) asparagine; by host glycosylation sites follow: Asn-918, Asn-963, and Asn-995. Disulfide bonds link Cys-967/Cys-1011, Cys-1068/Cys-1117, Cys-1079/Cys-1100, and Cys-1101/Cys-1104. The next 7 helical transmembrane spans lie at 1138–1158 (VMAFQGGGMEPMQLGMLVMIV), 1169–1189 (TAPIAWSALLLLMALVLFGGI), 1214–1234 (IVHLAMVAAFNIQPGLLIGFL), 1290–1310 (FALPLVSLLAPGLRIVGIDVV), 1337–1357 (MLLGVACATAGIASPLVFAGL), 1369–1389 (WPVSEALTAVGLTFALAGGIA), and 1395–1415 (SMAIPLAVGGIMLVVAVVTGF). The interval 1421 to 1460 (LEKASDISWSEEARVTGASQRFDVEIDQDGNMRLLNDPGV) is interacts with and activates NS3 protease. Residues 1499-1676 (GGVIWDVPAP…EKKEEEVPQV (178 aa)) form the Peptidase S7 domain. Active-site charge relay system; for serine protease NS3 activity residues include His-1549, Asp-1573, and Ser-1633. One can recognise a Helicase ATP-binding domain in the interval 1679 to 1835 (ENMLRKRQLT…DSNSPITDIE (157 aa)). Residues 1683–1686 (RKRQ) are important for RNA-binding. Residue 1692–1699 (LHPGSGKT) coordinates ATP. Residues 1783 to 1786 (DEAH) carry the DEAH box motif. In terms of domain architecture, Helicase C-terminal spans 1845 to 2011 (SGYEWITDFQ…GLVAQLYGPE (167 aa)). A regulates the ATPase activity of NS3 helicase region spans residues 2162–2166 (EELPE). 8 helical membrane passes run 2169-2189 (ETFLLVFMMTVASMGVFLFFV), 2194-2214 (LGKTGLGAMVMATVTVLLWIA), 2216-2236 (VPAQKIAGVLLVSLLLMIVLI), 2252-2272 (VFMIVVLLVVGAVASNEMGWL), 2306-2326 (AWAAYAGATTFLTPLLKHLII), 2334-2354 (LMAMTAQAGALFGLGKGMPFV), 2371-2391 (FTMTTTVSAVMMVILHYAFLV), and 2441-2461 (CVLVGIALVAVFLTPNTLTLT). Residues 2521–2786 (GGGTGRTLGE…DVDLGSGTRA (266 aa)) enclose the mRNA cap 0-1 NS5-type MT domain. S-adenosyl-L-methionine is bound at residue Ser-2576. At Ser-2576 the chain carries Phosphoserine. The active-site For 2'-O-MTase activity is Lys-2581. Residues Gly-2606, Trp-2607, Thr-2624, Lys-2625, and Val-2652 each coordinate S-adenosyl-L-methionine. Asp-2666 (for 2'-O-MTase activity) is an active-site residue. Position 2667 (Ile-2667) interacts with S-adenosyl-L-methionine. Residues Lys-2702 and Glu-2738 each act as for 2'-O-MTase activity in the active site. An S-adenosyl-L-methionine-binding site is contributed by Tyr-2740. 4 residues coordinate Zn(2+): Glu-2960, His-2964, Cys-2969, and Cys-2972. The RdRp catalytic domain occupies 3050–3202 (GLMYADDTAG…KPADDRFATA (153 aa)). Zn(2+)-binding residues include His-3237, Cys-3253, and Cys-3372. A PDZ-binding motif is present at residues 3423–3425 (GVL).

In the N-terminal section; belongs to the class I-like SAM-binding methyltransferase superfamily. mRNA cap 0-1 NS5-type methyltransferase family. As to quaternary structure, homodimer. Forms heterodimers with envelope protein E in the endoplasmic reticulum and Golgi. In terms of assembly, homodimer; in the endoplasmic reticulum and Golgi. Interacts with protein prM. Interacts with non-structural protein 1. As to quaternary structure, homodimer; Homohexamer when secreted. Interacts with envelope protein E. NS1 interacts with NS4B. Interacts with host MAVS (via C-terminus); this interaction blocks the interaction of MAVS with RIGI or IFIH1/MDA5. Interacts (via N-terminus) with serine protease NS3. In terms of assembly, forms a heterodimer with serine protease NS3. May form homooligomers. As to quaternary structure, forms a heterodimer with NS2B. Interacts with non-structural protein 2A (via N-terminus). Interacts with NS4B. Interacts with unphosphorylated RNA-directed RNA polymerase NS5; this interaction stimulates RNA-directed RNA polymerase NS5 guanylyltransferase activity. Interacts with serine protease NS3. In terms of assembly, homodimer. Specific enzymatic cleavages in vivo yield mature proteins. Cleavages in the lumen of endoplasmic reticulum are performed by host signal peptidase, whereas cleavages in the cytoplasmic side are performed by serine protease NS3. Signal cleavage at the 2K-4B site requires a prior NS3 protease-mediated cleavage at the 4A-2K site. Both NS2A and NS2B proteins are required in cis for NS2A/2B proteolytic processing. In terms of processing, cleaved in post-Golgi vesicles by a host furin, releasing the mature small envelope protein M, and peptide pr. This cleavage is incomplete as up to 30% of viral particles still carry uncleaved prM. Post-translationally, N-glycosylated. N-glycosylated. The excreted form is glycosylated and this is required for efficient secretion of the protein from infected cells. In terms of processing, phosphorylated on serines residues. This phosphorylation may trigger NS5 nuclear localization.

It localises to the virion. It is found in the host nucleus. The protein localises to the host cytoplasm. The protein resides in the host perinuclear region. Its subcellular location is the secreted. It localises to the virion membrane. It is found in the host endoplasmic reticulum membrane. The enzyme catalyses Selective hydrolysis of -Xaa-Xaa-|-Yaa- bonds in which each of the Xaa can be either Arg or Lys and Yaa can be either Ser or Ala.. It carries out the reaction RNA(n) + a ribonucleoside 5'-triphosphate = RNA(n+1) + diphosphate. The catalysed reaction is a ribonucleoside 5'-triphosphate + H2O = a ribonucleoside 5'-diphosphate + phosphate + H(+). It catalyses the reaction ATP + H2O = ADP + phosphate + H(+). The enzyme catalyses a 5'-end (5'-triphosphoguanosine)-ribonucleoside in mRNA + S-adenosyl-L-methionine = a 5'-end (N(7)-methyl 5'-triphosphoguanosine)-ribonucleoside in mRNA + S-adenosyl-L-homocysteine. It carries out the reaction a 5'-end (N(7)-methyl 5'-triphosphoguanosine)-ribonucleoside in mRNA + S-adenosyl-L-methionine = a 5'-end (N(7)-methyl 5'-triphosphoguanosine)-(2'-O-methyl-ribonucleoside) in mRNA + S-adenosyl-L-homocysteine + H(+). Functionally, capsid protein self-assembles to form an icosahedral capsid about 40 nm in diameter. Plays a role in virus budding by binding to the cell membrane and gathering the viral RNA into a nucleocapsid that forms the core of a mature virus particle. Prevents premature fusion activity of envelope proteins in trans-Golgi by binding to envelope protein E at pH6.0. After virion release in extracellular space, gets dissociated from E dimers. Its function is as follows. Acts as a chaperone for envelope protein E during intracellular virion assembly by masking and inactivating envelope protein E fusion peptide. prM is the only viral peptide matured by host furin in the trans-Golgi network probably to avoid catastrophic activation of the viral fusion activity in acidic Golgi compartment prior to virion release. prM-E cleavage is inefficient, and many virions are only partially matured. These uncleaved prM would play a role in immune evasion. In terms of biological role, may play a role in virus budding. Exerts cytotoxic effects by activating a mitochondrial apoptotic pathway through M ectodomain. May display a viroporin activity. Functionally, binds to host cell surface receptor and mediates fusion between viral and cellular membranes. Envelope protein is synthesized in the endoplasmic reticulum in the form of heterodimer with protein prM. They play a role in virion budding in the ER, and the newly formed immature particle is covered with 60 spikes composed of heterodimer between precursor prM and envelope protein E. The virion is transported to the Golgi apparatus where the low pH causes dissociation of PrM-E heterodimers and formation of E homodimers. Involved in immune evasion, pathogenesis and viral replication. Interacts with host MAVS and blocks MAVS binding to RIGI or IFIH1/MDA5, thereby leading to evasion of the innate immune response. Once cleaved off the polyprotein, is targeted to three destinations: the viral replication cycle, the plasma membrane and the extracellular compartment. Essential for viral replication. Required for formation of the replication complex and recruitment of other non-structural proteins to the ER-derived membrane structures. Excreted as a hexameric lipoparticle that plays a role against host immune response. Its function is as follows. Component of the viral RNA replication complex that functions in virion assembly. In terms of biological role, required cofactor for the serine protease function of NS3. May have membrane-destabilizing activity and form viroporins. Functionally, displays three enzymatic activities: serine protease, NTPase and RNA helicase. NS3 serine protease, in association with NS2B, performs its autocleavage and cleaves the polyprotein at dibasic sites in the cytoplasm: C-prM, NS2A-NS2B, NS2B-NS3, NS3-NS4A, NS4A-2K and NS4B-NS5. NS3 RNA helicase binds RNA and unwinds dsRNA in the 3' to 5' direction. Regulates the ATPase activity of the NS3 helicase activity. NS4A allows NS3 helicase to conserve energy during unwinding. Its function is as follows. Functions as a signal peptide for NS4B. In terms of biological role, induces the formation of ER-derived membrane vesicles where the viral replication takes place. Functionally, replicates the viral (+) and (-) RNA genome, and performs the capping of genomes in the cytoplasm. NS5 methylates viral RNA cap at guanine N-7 and ribose 2'-O positions. The chain is Genome polyprotein from Anas (ducks).